Reading from the N-terminus, the 285-residue chain is MGNLFCCVQVDQSTVAIKEQFGKYRDVLEPGCHCVPWFLGSQLAGHLSLRVQQLDVRCETKTKDNVFVNVVASIQYRALADKANEAFYKLSNTKGQIQAYVFDVIRASVPKLNLDDVFEQKNEIAKSVEEELEKAMSAYGYEIVQTLIVDIVPDEHVKRAMNEINAAARLRVAANEKAEAEKILQIKRAEGEAESKYLSGLGIARQRQAIVDGLRDSVLGFSVNVPGTTAKDVMDMVLVTQYFDTMKEIGAASKSSAVFIPHGPGAVKNVAQQIRDGLLQASVGH.

Residue G2 is the site of N-myristoyl glycine attachment. The stretch at 118-190 forms a coiled coil; the sequence is FEQKNEIAKS…EKILQIKRAE (73 aa).

As to quaternary structure, homo- and heterodimer. Interacts with LRR1 (via LRR domain). Constitutively expressed in stems, roots and flowers, but not in leaves and fruits.

In terms of biological role, positive regulator of hypersensitive response (HR)-like cell death. May be involved in potassium ion channel regulation. The chain is Hypersensitive-induced reaction 1 protein from Capsicum annuum (Capsicum pepper).